The chain runs to 413 residues: Inactive serine protease 35 (413 aa).

The signal sequence occupies residues 1–16; sequence MENMLLWLIFFTPGWT. The N-linked (GlcNAc...) asparagine glycan is linked to Asn-90. The 285-residue stretch at 124-408 folds into the Peptidase S1 domain; it reads VYGTDSRFSI…ICLWIHGNDA (285 aa). Cysteines 154 and 170 form a disulfide. Over residues 191–207 the composition is skewed to basic residues; that stretch reads MRNKSGGKKRRGSKRSR. Residues 191–250 are disordered; it reads MRNKSGGKKRRGSKRSRREASGGDQREGTREHLRERAKGGRRRKKSGRGQRIAEGRPSFQ. Residues 208-228 show a composition bias toward basic and acidic residues; the sequence is REASGGDQREGTREHLRERAK. Positions 229-238 are enriched in basic residues; sequence GGRRRKKSGR.

Belongs to the peptidase S1 family.

Its subcellular location is the secreted. The polypeptide is Inactive serine protease 35 (PRSS35) (Homo sapiens (Human)).